The chain runs to 118 residues: Large ribosomal subunit protein bL20 (118 aa).

The protein belongs to the bacterial ribosomal protein bL20 family.

In terms of biological role, binds directly to 23S ribosomal RNA and is necessary for the in vitro assembly process of the 50S ribosomal subunit. It is not involved in the protein synthesizing functions of that subunit. This chain is Large ribosomal subunit protein bL20, found in Thermotoga petrophila (strain ATCC BAA-488 / DSM 13995 / JCM 10881 / RKU-1).